Here is a 135-residue protein sequence, read N- to C-terminus: Large ribosomal subunit protein uL16c (135 aa).

Belongs to the universal ribosomal protein uL16 family. Part of the 50S ribosomal subunit.

It is found in the plastid. The protein resides in the chloroplast. This is Large ribosomal subunit protein uL16c from Jasminum nudiflorum (Winter jasmine).